Here is a 225-residue protein sequence, read N- to C-terminus: Claudin-8 (225 aa).

Topologically, residues 1 to 7 (MATYALQ) are cytoplasmic. Residues 8 to 28 (MAALVLGGVGMVGTVAVTIMP) traverse the membrane as a helical segment. Residues 29–81 (QWRVSAFIESNIVVFENRWEGLWMNCMRHANIRMQCKVYDSLLALSPDLQASR) are Extracellular-facing. Residues 82 to 102 (GLMCAASVLAFLAFMTAILGM) form a helical membrane-spanning segment. The Cytoplasmic segment spans residues 103 to 117 (KCTRCTGDDENVKSR). Residues 118-138 (ILLTAGIIFFITGLVVLIPVS) form a helical membrane-spanning segment. Residues 139-166 (WVANSIIRDFYNPLVDVALKRELGEALY) are Extracellular-facing. Residues 167–187 (IGWTTALVLIAGGALFCCVFC) traverse the membrane as a helical segment. The Cytoplasmic portion of the chain corresponds to 188–225 (CTERSNSYRYSVPSHRTTQRSFHAEKRSPSIYSKSQYV). A Glycyl lysine isopeptide (Lys-Gly) (interchain with G-Cter in ubiquitin) cross-link involves residue K213. The interactions with TJP1, TJP2 and TJP3 stretch occupies residues 224-225 (YV).

It belongs to the claudin family. Can form heteropolymeric strands with other claudins. Interacts with CLDN4. Directly interacts with TJP1/ZO-1, TJP2/ZO-2 and TJP3/ZO-3. Interacts with KLHL3. Ubiquitinated by the BCR(KLHL3) E3 ubiquitin ligase complex in the kidney, leading to its degradation. As to expression, expressed primarily in lung and kidney. Present in both cortical and medullar collecting ducts (at protein level).

Its subcellular location is the cell junction. The protein resides in the tight junction. It is found in the cell membrane. It catalyses the reaction chloride(in) = chloride(out). It carries out the reaction bromide(in) = bromide(out). The catalysed reaction is iodide(out) = iodide(in). The enzyme catalyses fluoride(in) = fluoride(out). Functionally, can associate with other claudins to regulate tight junction structural and functional strand dynamics. May coassemble with CLDN4 into tight junction strands containing anion-selective channels that convey paracellular chloride permeability in renal collecting ducts. Cannot form tight junction strands on its own. This chain is Claudin-8, found in Mus musculus (Mouse).